We begin with the raw amino-acid sequence, 299 residues long: Ribosomal protein L11 methyltransferase (299 aa).

Positions 144, 165, 187, and 229 each coordinate S-adenosyl-L-methionine.

The protein belongs to the methyltransferase superfamily. PrmA family.

The protein localises to the cytoplasm. It catalyses the reaction L-lysyl-[protein] + 3 S-adenosyl-L-methionine = N(6),N(6),N(6)-trimethyl-L-lysyl-[protein] + 3 S-adenosyl-L-homocysteine + 3 H(+). Its function is as follows. Methylates ribosomal protein L11. The sequence is that of Ribosomal protein L11 methyltransferase from Teredinibacter turnerae (strain ATCC 39867 / T7901).